A 410-amino-acid chain; its full sequence is Scarecrow-like protein 32 (410 aa).

In terms of domain architecture, GRAS spans Leu18–Val408. A leucine repeat I (LRI) region spans residues Asn25–Ser88. Residues Leu107–Tyr188 are VHIID. Residues Val138–Asp142 carry the VHIID motif. The leucine repeat II (LRII) stretch occupies residues Glu190–Arg227. Residues Leu237–Asn329 form a PFYRE region. Residues Ala332–Val408 form an SAW region.

Belongs to the GRAS family. In terms of tissue distribution, expressed in seedlings, leaves and flowers.

It localises to the nucleus. In terms of biological role, probable transcription factor involved in plant development. This chain is Scarecrow-like protein 32 (SCL32), found in Arabidopsis thaliana (Mouse-ear cress).